The sequence spans 62 residues: Sec-independent protein translocase protein TatAc (62 aa).

The helical transmembrane segment at 8-28 (ILVILFVGFLVFGPDKLPALG) threads the bilayer.

Belongs to the TatA/E family. In terms of assembly, forms a complex with TatC.

It is found in the cell membrane. Its function is as follows. Part of the twin-arginine translocation (Tat) system that transports large folded proteins containing a characteristic twin-arginine motif in their signal peptide across membranes. TatA could form the protein-conducting channel of the Tat system. The polypeptide is Sec-independent protein translocase protein TatAc (Bacillus subtilis (strain 168)).